We begin with the raw amino-acid sequence, 311 residues long: Protein YIPF2 (311 aa).

Ala-2 is modified (N-acetylalanine). Over 2 to 120 (AAADDLAFHE…LRNRPDLYGP (119 aa)) the chain is Cytoplasmic. A helical membrane pass occupies residues 121-141 (FWICATLAFVLAVTGNLTLVL). Residues 142-159 (AQRRDPSIHYSPQFHKVT) lie on the Lumenal side of the membrane. Residues 160–180 (IAGITIYCYAWLVPLALWGFL) traverse the membrane as a helical segment. At 181-198 (RWRQGTRERMGLYTFLET) the chain is on the cytoplasmic side. A helical transmembrane segment spans residues 199 to 219 (VCVYGYSLFVFIPTVVLWLIP). Topologically, residues 220 to 226 (VQWLQWL) are lumenal. A helical membrane pass occupies residues 227–247 (FGALALALSAAGLVFTLWPVV). At 248–252 (REDTR) the chain is on the cytoplasmic side. The helical transmembrane segment at 253 to 273 (LVAAALLSIVVLLHALLALGC) threads the bilayer. Residues 274–311 (KLYFFQPLPLDHVVPAPQAIPPSPNVLLPSSVQPMTTF) lie on the Lumenal side of the membrane.

This sequence belongs to the YIP1 family. As to quaternary structure, interacts with YIPF6; this interaction may stabilize YIPF2. May also form a ternary complex with YIPF1 and YIPF6.

The protein localises to the golgi apparatus. Its subcellular location is the cis-Golgi network membrane. It localises to the trans-Golgi network membrane. The protein resides in the late endosome membrane. This chain is Protein YIPF2 (Yipf2), found in Rattus norvegicus (Rat).